A 206-amino-acid chain; its full sequence is N-(5'-phosphoribosyl)anthranilate isomerase (206 aa).

It belongs to the TrpF family.

The catalysed reaction is N-(5-phospho-beta-D-ribosyl)anthranilate = 1-(2-carboxyphenylamino)-1-deoxy-D-ribulose 5-phosphate. It functions in the pathway amino-acid biosynthesis; L-tryptophan biosynthesis; L-tryptophan from chorismate: step 3/5. This is N-(5'-phosphoribosyl)anthranilate isomerase from Pseudomonas putida (strain ATCC 700007 / DSM 6899 / JCM 31910 / BCRC 17059 / LMG 24140 / F1).